Here is a 179-residue protein sequence, read N- to C-terminus: Insulin-like growth factor 2 (179 aa).

The signal sequence occupies residues 1–24 (MGITAGKSVLVLLAFLAFASCCYA). Residues 25-52 (AYRPSETLCGGELVDTLQFVCGDRGFYF) are b. Cystine bridges form between Cys33–Cys71, Cys45–Cys84, and Cys70–Cys75. The tract at residues 53-64 (SRPSSRINRRSR) is c. The a stretch occupies residues 65–85 (GIVEECCFRSCDLALLETYCA). Residues 86–91 (TPAKSE) are d. Positions 92 to 179 (RDVSASTTVL…GGASSKASSD (88 aa)) are cleaved as a propeptide — e peptide. O-linked (GalNAc...) threonine glycosylation is present at Thr106. An O-linked (GalNAc...) serine glycan is attached at Ser154. Residues 160 to 179 (ALPTQDPATHGGASSKASSD) are disordered. O-linked (GalNAc...) threonine glycosylation occurs at Thr163.

It belongs to the insulin family. Interacts with MYORG; this interaction is required for IGF2 secretion. Interacts with integrins ITGAV:ITGB3 and ITGA6:ITGB4; integrin-binding is required for IGF2 signaling. Interacts with IGFBP2. In terms of processing, proteolytically processed by PCSK4, proIGF2 is cleaved at Arg-128 and Arg-92 to generate big-IGF2 and mature IGF2.

The protein localises to the secreted. The insulin-like growth factors possess growth-promoting activity. Major fetal growth hormone in mammals. Plays a key role in regulating fetoplacental development. IGF2 is influenced by placental lactogen. Also involved in tissue differentiation. In adults, involved in glucose metabolism in adipose tissue, skeletal muscle and liver. Acts as a ligand for integrin which is required for IGF2 signaling. Positively regulates myogenic transcription factor MYOD1 function by facilitating the recruitment of transcriptional coactivators, thereby controlling muscle terminal differentiation. Inhibits myoblast differentiation and modulates metabolism via increasing the mitochondrial respiration rate. In terms of biological role, preptin undergoes glucose-mediated co-secretion with insulin, and acts as a physiological amplifier of glucose-mediated insulin secretion. Exhibits osteogenic properties by increasing osteoblast mitogenic activity through phosphoactivation of MAPK1 and MAPK3. This is Insulin-like growth factor 2 from Bos taurus (Bovine).